The sequence spans 189 residues: MTKLPYALLDKGSLLVASPDVNGGIFSRSVVLLCEHSPNGSFGLILNKILEIDSPEEIFPLDHFDESKVRFCMGGPLQANQIMLLHTSPDSANSSIEICPSVFLGGDFSFAGEKEGRTRDDKMLLCFGYSGWQGGQLEKEFLEGLWFLAPSSQEIIFTDAPERMWSDVLQHLGGRFASLSTIPENLLLN.

Belongs to the UPF0301 (AlgH) family.

The sequence is that of UPF0301 protein CTLon_0458 from Chlamydia trachomatis serovar L2b (strain UCH-1/proctitis).